We begin with the raw amino-acid sequence, 155 residues long: Myelin basic protein (155 aa).

2 disordered regions span residues 1–70 and 109–155; these read MASA…GRQT and TDGQ…PARR. A2 carries the N-acetylalanine modification. Basic and acidic residues-rich tracts occupy residues 37 to 49 and 123 to 134; these read GSRK…KEPA and KSKEAYRGRRDG.

It belongs to the myelin basic protein family.

It is found in the myelin membrane. In terms of biological role, this protein may function to maintain proper structure of myelin. This chain is Myelin basic protein (MBP), found in Heterodontus francisci (Horn shark).